Consider the following 298-residue polypeptide: N-acetylmuramic acid 6-phosphate etherase (298 aa).

Positions Ile57–Lys220 constitute an SIS domain. The active-site Proton donor is the Glu85. Glu116 is an active-site residue.

It belongs to the GCKR-like family. MurNAc-6-P etherase subfamily. As to quaternary structure, homodimer.

The catalysed reaction is N-acetyl-D-muramate 6-phosphate + H2O = N-acetyl-D-glucosamine 6-phosphate + (R)-lactate. The protein operates within amino-sugar metabolism; 1,6-anhydro-N-acetylmuramate degradation. Its pathway is amino-sugar metabolism; N-acetylmuramate degradation. It functions in the pathway cell wall biogenesis; peptidoglycan recycling. Its function is as follows. Specifically catalyzes the cleavage of the D-lactyl ether substituent of MurNAc 6-phosphate, producing GlcNAc 6-phosphate and D-lactate. Together with AnmK, is also required for the utilization of anhydro-N-acetylmuramic acid (anhMurNAc) either imported from the medium or derived from its own cell wall murein, and thus plays a role in cell wall recycling. The sequence is that of N-acetylmuramic acid 6-phosphate etherase from Aeromonas hydrophila subsp. hydrophila (strain ATCC 7966 / DSM 30187 / BCRC 13018 / CCUG 14551 / JCM 1027 / KCTC 2358 / NCIMB 9240 / NCTC 8049).